We begin with the raw amino-acid sequence, 203 residues long: Twist-related protein 1 (203 aa).

Over residues 1–18 the composition is skewed to low complexity; the sequence is MMQDVSSSPVSPADDSLS. Residues 1-106 are disordered; sequence MMQDVSSSPV…GGGSPQSYEE (106 aa). The span at 34–43 shows a compositional bias: basic residues; it reads RGGRKRRSSS. 2 stretches are compositionally biased toward gly residues: residues 47–66 and 81–100; these read AGGGAGPGGAASGGVGGGDE and GCGGGGGGGAGGGSSSGGGS. The bHLH domain occupies 109 to 160; it reads TQRVMANVRERQRTQSLNEAFAALRKIIPTLPSDKLSKIQTLKLAARYIDFL. The segment at 162–192 is sufficient for transactivation activity; sequence QVLQSDELDSKMASCSYVAHERLSYAFSVWR.

Efficient DNA binding requires dimerization with another bHLH protein. Homodimer or heterodimer with E proteins such as TCF3. ID1 binds preferentially to TCF3 but does not interact efficiently with TWIST1 so ID1 levels control the amount of TCF3 available to dimerize with TWIST and thus determine the type of dimer formed.

It localises to the nucleus. Its function is as follows. Acts as a transcriptional regulator. Inhibits myogenesis by sequestrating E proteins, inhibiting trans-activation by MEF2, and inhibiting DNA-binding by MYOD1 through physical interaction. This interaction probably involves the basic domains of both proteins. Also represses expression of pro-inflammatory cytokines such as TNFA and IL1B. Regulates cranial suture patterning and fusion. Activates transcription as a heterodimer with E proteins. Regulates gene expression differentially, depending on dimer composition. Homodimers induce expression of FGFR2 and POSTN while heterodimers repress FGFR2 and POSTN expression and induce THBS1 expression. Heterodimerization is also required for osteoblast differentiation. Represses the activity of the circadian transcriptional activator: NPAS2-BMAL1 heterodimer. This is Twist-related protein 1 (TWIST1) from Pongo pygmaeus (Bornean orangutan).